A 63-amino-acid chain; its full sequence is Large ribosomal subunit protein uL29 (63 aa).

Belongs to the universal ribosomal protein uL29 family.

This Proteus mirabilis (strain HI4320) protein is Large ribosomal subunit protein uL29.